A 122-amino-acid chain; its full sequence is Large ribosomal subunit protein bL12 (122 aa).

The protein belongs to the bacterial ribosomal protein bL12 family. Homodimer. Part of the ribosomal stalk of the 50S ribosomal subunit. Forms a multimeric L10(L12)X complex, where L10 forms an elongated spine to which 2 to 4 L12 dimers bind in a sequential fashion. Binds GTP-bound translation factors.

Functionally, forms part of the ribosomal stalk which helps the ribosome interact with GTP-bound translation factors. Is thus essential for accurate translation. The sequence is that of Large ribosomal subunit protein bL12 from Staphylococcus haemolyticus (strain JCSC1435).